A 396-amino-acid chain; its full sequence is MAAVDTFLFTSESVNEGHPDKLCDQISDAVLDACLAEDPDSKVACETCTKTNMVMVFGEITTKANVDYEKIVRDTCRGIGFVSNDVGLDADHCKVLVNIEQQSPDIAQGVHGHFTKRPEEIGAGDQGHMFGYATDETPEFMPLSHVLATKLGARLTEVRKNATCPWLRPDGKTQVTVEYHNDNGAMVPIRVHTVLISTQHDETVTNDEIAADLKEHVIKPVIPEQYLDENTIFHLNPSGRFVIGGPHGDAGLTGRKIIIDTYGGWGAHGGGAFSGKDPTKVDRSGAYVARQAAKSIVASGIARRCIVQVSYAIGVPEPLSVFVDTYGTGKIPDKEILEIVKENFDFRPGMIIINLDLKRGGKGRYLKTAAYGHFGREGADFTWEVVKPLKWEKPSA.

Mg(2+) is bound at residue Glu12. His18 lines the ATP pocket. Glu46 provides a ligand contact to K(+). 2 residues coordinate L-methionine: Glu59 and Gln102. Residues 170–172 (DGK), 238–241 (SGRF), Asp249, 255–256 (RK), Ala272, Lys276, and Lys280 contribute to the ATP site. Asp249 contacts L-methionine. Residue Lys280 participates in L-methionine binding.

It belongs to the AdoMet synthase family. As to quaternary structure, homotetramer. The cofactor is Mn(2+). Requires Mg(2+) as cofactor. Co(2+) is required as a cofactor. It depends on K(+) as a cofactor.

It localises to the cytoplasm. The enzyme catalyses L-methionine + ATP + H2O = S-adenosyl-L-methionine + phosphate + diphosphate. Its pathway is amino-acid biosynthesis; S-adenosyl-L-methionine biosynthesis; S-adenosyl-L-methionine from L-methionine: step 1/1. In terms of biological role, catalyzes the formation of S-adenosylmethionine from methionine and ATP. The reaction comprises two steps that are both catalyzed by the same enzyme: formation of S-adenosylmethionine (AdoMet) and triphosphate, and subsequent hydrolysis of the triphosphate. The protein is S-adenosylmethionine synthase (SAMS) of Triticum aestivum (Wheat).